We begin with the raw amino-acid sequence, 415 residues long: Probable glucuronosyltransferase Os03g0287800 (415 aa).

The Cytoplasmic portion of the chain corresponds to 1 to 25 (MGSSTDHGGAGGRGKKGSGSQLWKK). The chain crosses the membrane as a helical; Signal-anchor for type II membrane protein span at residues 26–43 (ALLHSSLCFVMGFFTGFA). Over 44–415 (PSSVSDWTSA…GGRFLSGDFC (372 aa)) the chain is Lumenal. N-linked (GlcNAc...) asparagine glycosylation is found at asparagine 78, asparagine 165, asparagine 257, and asparagine 287.

It belongs to the glycosyltransferase 43 family.

It is found in the golgi apparatus membrane. Functionally, involved in the synthesis of glucuronoxylan hemicellulose in secondary cell walls. This is Probable glucuronosyltransferase Os03g0287800 from Oryza sativa subsp. japonica (Rice).